The primary structure comprises 341 residues: tRNA N6-adenosine threonylcarbamoyltransferase (341 aa).

Residues histidine 116 and histidine 120 each contribute to the Fe cation site. Substrate contacts are provided by residues 139–143 (LVSGG), aspartate 172, glycine 185, and asparagine 274. Residue aspartate 302 participates in Fe cation binding.

Belongs to the KAE1 / TsaD family. It depends on Fe(2+) as a cofactor.

Its subcellular location is the cytoplasm. The enzyme catalyses L-threonylcarbamoyladenylate + adenosine(37) in tRNA = N(6)-L-threonylcarbamoyladenosine(37) in tRNA + AMP + H(+). In terms of biological role, required for the formation of a threonylcarbamoyl group on adenosine at position 37 (t(6)A37) in tRNAs that read codons beginning with adenine. Is involved in the transfer of the threonylcarbamoyl moiety of threonylcarbamoyl-AMP (TC-AMP) to the N6 group of A37, together with TsaE and TsaB. TsaD likely plays a direct catalytic role in this reaction. The chain is tRNA N6-adenosine threonylcarbamoyltransferase from Vesicomyosocius okutanii subsp. Calyptogena okutanii (strain HA).